The sequence spans 196 residues: ATP-dependent Clp protease proteolytic subunit (196 aa).

S101 acts as the Nucleophile in catalysis. The active site involves H126.

This sequence belongs to the peptidase S14 family. In terms of assembly, component of the chloroplastic Clp protease core complex.

It is found in the plastid. The protein resides in the chloroplast stroma. It carries out the reaction Hydrolysis of proteins to small peptides in the presence of ATP and magnesium. alpha-casein is the usual test substrate. In the absence of ATP, only oligopeptides shorter than five residues are hydrolyzed (such as succinyl-Leu-Tyr-|-NHMec, and Leu-Tyr-Leu-|-Tyr-Trp, in which cleavage of the -Tyr-|-Leu- and -Tyr-|-Trp bonds also occurs).. Cleaves peptides in various proteins in a process that requires ATP hydrolysis. Has a chymotrypsin-like activity. Plays a major role in the degradation of misfolded proteins. In Lepidium virginicum (Virginia pepperweed), this protein is ATP-dependent Clp protease proteolytic subunit.